Here is a 336-residue protein sequence, read N- to C-terminus: NAC domain-containing protein 100 (336 aa).

The NAC domain maps to L16–K166. Residues V113–K172 mediate DNA binding. The tract at residues R313–Y336 is disordered.

Its subcellular location is the nucleus. Binds to the promoter regions of genes involved in chlorophyll catabolic processes, such as NYC1, SGR1, SGR2 and PAO. The chain is NAC domain-containing protein 100 from Arabidopsis thaliana (Mouse-ear cress).